The primary structure comprises 350 residues: Holliday junction branch migration complex subunit RuvB (350 aa).

The segment at methionine 1–arginine 22 is disordered. Positions methionine 1–tyrosine 185 are large ATPase domain (RuvB-L). ATP-binding positions include leucine 24, arginine 25, glycine 66, lysine 69, threonine 70, threonine 71, glutamate 132 to tyrosine 134, arginine 175, tyrosine 185, and arginine 222. Threonine 70 is a binding site for Mg(2+). Positions threonine 186–lysine 256 are small ATPAse domain (RuvB-S). The segment at glutamate 259 to leucine 350 is head domain (RuvB-H). Positions 314 and 319 each coordinate DNA.

It belongs to the RuvB family. Homohexamer. Forms an RuvA(8)-RuvB(12)-Holliday junction (HJ) complex. HJ DNA is sandwiched between 2 RuvA tetramers; dsDNA enters through RuvA and exits via RuvB. An RuvB hexamer assembles on each DNA strand where it exits the tetramer. Each RuvB hexamer is contacted by two RuvA subunits (via domain III) on 2 adjacent RuvB subunits; this complex drives branch migration. In the full resolvosome a probable DNA-RuvA(4)-RuvB(12)-RuvC(2) complex forms which resolves the HJ.

The protein resides in the cytoplasm. The catalysed reaction is ATP + H2O = ADP + phosphate + H(+). Functionally, the RuvA-RuvB-RuvC complex processes Holliday junction (HJ) DNA during genetic recombination and DNA repair, while the RuvA-RuvB complex plays an important role in the rescue of blocked DNA replication forks via replication fork reversal (RFR). RuvA specifically binds to HJ cruciform DNA, conferring on it an open structure. The RuvB hexamer acts as an ATP-dependent pump, pulling dsDNA into and through the RuvAB complex. RuvB forms 2 homohexamers on either side of HJ DNA bound by 1 or 2 RuvA tetramers; 4 subunits per hexamer contact DNA at a time. Coordinated motions by a converter formed by DNA-disengaged RuvB subunits stimulates ATP hydrolysis and nucleotide exchange. Immobilization of the converter enables RuvB to convert the ATP-contained energy into a lever motion, pulling 2 nucleotides of DNA out of the RuvA tetramer per ATP hydrolyzed, thus driving DNA branch migration. The RuvB motors rotate together with the DNA substrate, which together with the progressing nucleotide cycle form the mechanistic basis for DNA recombination by continuous HJ branch migration. Branch migration allows RuvC to scan DNA until it finds its consensus sequence, where it cleaves and resolves cruciform DNA. This is Holliday junction branch migration complex subunit RuvB from Treponema pallidum (strain Nichols).